We begin with the raw amino-acid sequence, 184 residues long: Peptide deformylase (184 aa).

2 residues coordinate Fe cation: Cys-111 and His-154. Glu-155 is an active-site residue. His-158 serves as a coordination point for Fe cation.

It belongs to the polypeptide deformylase family. It depends on Fe(2+) as a cofactor.

The enzyme catalyses N-terminal N-formyl-L-methionyl-[peptide] + H2O = N-terminal L-methionyl-[peptide] + formate. Its function is as follows. Removes the formyl group from the N-terminal Met of newly synthesized proteins. Requires at least a dipeptide for an efficient rate of reaction. N-terminal L-methionine is a prerequisite for activity but the enzyme has broad specificity at other positions. The polypeptide is Peptide deformylase (Macrococcus caseolyticus (strain JCSC5402) (Macrococcoides caseolyticum)).